A 480-amino-acid chain; its full sequence is Carboxy-terminal processing protease CtpB (480 aa).

The N-terminal stretch at 1 to 23 (MNQKIMAVIAAGSMLFGGAGVYA) is a signal peptide. In terms of domain architecture, PDZ spans 92–182 (SVYMDKQTAK…SSVSMKIQRP (91 aa)). The tract at residues 113 to 116 (GIGA) is peptide binding. S309 acts as the Nucleophile in catalysis. Residues K334 and Q338 each act as charge relay system in the active site.

The protein belongs to the peptidase S41A family. In terms of assembly, homodimer. In terms of processing, is cleaved by SpoIVB in vitro and in vivo but this cleavage does not appear to be necessary for CtpB activation. CtpB can also cleave itself in vivo.

It is found in the forespore intermembrane space. The enzyme catalyses The enzyme shows specific recognition of a C-terminal tripeptide, Xaa-Yaa-Zaa, in which Xaa is preferably Ala or Leu, Yaa is preferably Ala or Tyr, and Zaa is preferably Ala, but then cleaves at a variable distance from the C-terminus. A typical cleavage is -Ala-Ala-|-Arg-Ala-Ala-Lys-Glu-Asn-Tyr-Ala-Leu-Ala-Ala.. Activated by peptide binding to the PDZ domain. Its function is as follows. Involved in the signal transduction pathway leading to the proteolytic activation of the mother cell transcription factor pro-sigma-K during sporulation. The signaling serine protease CtpB triggers pro-sigma-K processing by cleaving the pre-processed regulatory protein SpoIVFA and is necessary for the proper timing of sigma-K activation. This Bacillus subtilis (strain 168) protein is Carboxy-terminal processing protease CtpB (ctpB).